Consider the following 460-residue polypeptide: tRNA hydroxylation protein P (460 aa).

This sequence belongs to the peptidase U32 family.

In terms of biological role, involved in prephenate-dependent formation of 5-hydroxyuridine (ho5U) modification at position 34 in tRNAs, the first step in 5-carboxymethoxyuridine (cmo5U) biosynthesis. The sequence is that of tRNA hydroxylation protein P from Haemophilus influenzae (strain ATCC 51907 / DSM 11121 / KW20 / Rd).